Reading from the N-terminus, the 698-residue chain is Elongation factor G (698 aa).

The tr-type G domain maps to 10–285 (AGTRNIGIMA…AVVDFLPNPL (276 aa)). Residues 19-26 (AHIDAGKT), 83-87 (DTPGH), and 137-140 (NKMD) each bind GTP.

It belongs to the TRAFAC class translation factor GTPase superfamily. Classic translation factor GTPase family. EF-G/EF-2 subfamily.

The protein localises to the cytoplasm. Functionally, catalyzes the GTP-dependent ribosomal translocation step during translation elongation. During this step, the ribosome changes from the pre-translocational (PRE) to the post-translocational (POST) state as the newly formed A-site-bound peptidyl-tRNA and P-site-bound deacylated tRNA move to the P and E sites, respectively. Catalyzes the coordinated movement of the two tRNA molecules, the mRNA and conformational changes in the ribosome. This is Elongation factor G from Frankia casuarinae (strain DSM 45818 / CECT 9043 / HFP020203 / CcI3).